The primary structure comprises 962 residues: Oncostatin-M-specific receptor subunit beta (962 aa).

An N-terminal signal peptide occupies residues M1–G28. Residues E29 to M738 are Extracellular-facing. N219 carries an N-linked (GlcNAc...) asparagine glycan. Fibronectin type-III domains follow at residues E237–K332, A333–A426, P428–E527, E528–L621, and P623–V734. The cysteines at positions 243 and 253 are disulfide-linked. The N-linked (GlcNAc...) asparagine glycan is linked to N324. A WSXWS motif motif is present at residues W413–M417. Residues N492, N578, and N723 are each glycosylated (N-linked (GlcNAc...) asparagine). The chain crosses the membrane as a helical span at residues L739–W759. Over K760–S962 the chain is Cytoplasmic. The short motif at C768–Y776 is the Box 1 motif element. The disordered stretch occupies residues V818–D840.

The protein belongs to the type I cytokine receptor family. Type 2 subfamily. Heterodimer composed of OSMR and IL6ST (type II OSM receptor). Heterodimer with IL31RA to form the IL31 receptor. In terms of tissue distribution, widely expressed. Expressed at high levels in the liver, skin and spleen. In the liver it is expressed exclusively in the oval cells.

The protein resides in the membrane. Associates with IL31RA to form the IL31 receptor. Binds IL31 and activates STAT1, STAT3 and STAT5. Capable of transducing OSM-specific signaling events. The OSM/OSM-R system is pivotal in the differentiation of oval cells into hepatocytes, thereby promoting liver regeneration. The polypeptide is Oncostatin-M-specific receptor subunit beta (Osmr) (Rattus norvegicus (Rat)).